Here is a 160-residue protein sequence, read N- to C-terminus: Putative antiporter subunit mnhE2 (160 aa).

3 helical membrane-spanning segments follow: residues 22-42, 55-75, and 100-120; these read HFKF…IYIL, IWVA…SSIS, and SDWS…STVI.

Belongs to the CPA3 antiporters (TC 2.A.63) subunit E family. In terms of assembly, may form a heterooligomeric complex that consists of seven subunits: mnhA2, mnhB2, mnhC2, mnhD2, mnhE2, mnhF2 and mnhG2.

Its subcellular location is the cell membrane. In Staphylococcus aureus (strain USA300), this protein is Putative antiporter subunit mnhE2 (mnhE2).